Consider the following 109-residue polypeptide: Large ribosomal subunit protein uL22 (109 aa).

This sequence belongs to the universal ribosomal protein uL22 family. As to quaternary structure, part of the 50S ribosomal subunit.

Its function is as follows. This protein binds specifically to 23S rRNA; its binding is stimulated by other ribosomal proteins, e.g. L4, L17, and L20. It is important during the early stages of 50S assembly. It makes multiple contacts with different domains of the 23S rRNA in the assembled 50S subunit and ribosome. In terms of biological role, the globular domain of the protein is located near the polypeptide exit tunnel on the outside of the subunit, while an extended beta-hairpin is found that lines the wall of the exit tunnel in the center of the 70S ribosome. The chain is Large ribosomal subunit protein uL22 from Polynucleobacter asymbioticus (strain DSM 18221 / CIP 109841 / QLW-P1DMWA-1) (Polynucleobacter necessarius subsp. asymbioticus).